Here is a 467-residue protein sequence, read N- to C-terminus: MDLHGCAKNQVDAELIIGIMENLSWKNTSDPDEADLIIVNSCGFINSAKEESINAVLQAKAAHPKAKVLLAGCLAERYADILKNDLPEADGIFGNGNLSLLPQLIDSMFPKKTSDEKFIEKTLVPPQIGICGGERPKILNFPRSTYIKITEGCDNFCSFCAIPIIRGRLRSRPIKDICDEIKTFLKKSFYEFNLIGQDLAAYQTGKDDLSEDELHRENCSGLALLLKSISKIKGNFKIRLLYIHPDHFPLDILPIMTADKRFLPYFDIPFQSGAQKIIRAMNRNGAAEVYLDIIKNIREAFEKTNSPYGEPQIRTTFLVGFPGETDEDFNETIKFLKELRPLWSGGFTYSREEDTPSYSFKGKVPKKTAEARLAEIQNAQTSITEKKLDSFIGKEIEVLVEELIQAEDKTFLALGRAWFQAPEVDGAVVLNFNLNKKDIDGNPIAPGSIVKARIAARNGFDLEAVAV.

The region spanning 1–110 is the MTTase N-terminal domain; the sequence is MDLHGCAKNQ…LPQLIDSMFP (110 aa). [4Fe-4S] cluster is bound by residues cysteine 6, cysteine 42, cysteine 73, cysteine 153, cysteine 157, and cysteine 160. A Radical SAM core domain is found at 139-386; sequence LNFPRSTYIK…QNAQTSITEK (248 aa). The 79-residue stretch at 389–467 folds into the TRAM domain; it reads DSFIGKEIEV…NGFDLEAVAV (79 aa).

The protein belongs to the methylthiotransferase family. RimO subfamily. [4Fe-4S] cluster serves as cofactor.

The protein localises to the cytoplasm. The catalysed reaction is L-aspartate(89)-[ribosomal protein uS12]-hydrogen + (sulfur carrier)-SH + AH2 + 2 S-adenosyl-L-methionine = 3-methylsulfanyl-L-aspartate(89)-[ribosomal protein uS12]-hydrogen + (sulfur carrier)-H + 5'-deoxyadenosine + L-methionine + A + S-adenosyl-L-homocysteine + 2 H(+). Catalyzes the methylthiolation of an aspartic acid residue of ribosomal protein uS12. This is Ribosomal protein uS12 methylthiotransferase RimO from Treponema denticola (strain ATCC 35405 / DSM 14222 / CIP 103919 / JCM 8153 / KCTC 15104).